The primary structure comprises 691 residues: MGRAKSMVSLLLVLFLVRAHVATTETTTEFIFHGFKGNQSEIHMQGDSTITSNGLLRLTDRNSDVVGTAFYHKPVRLLDSNSTNTTVRSFSTSFIFIIPSSSTSNGGFGFTFTLSPTPNRTDADPEQYMGLLNERNDGNSSNHVFAVEFDTVQGFKDGTNRIGNHIGLNFNSLSSDVQEPVAYFNNNDSQKEEFQLVSGEPIQVFLDYHGPTKTLNLTVYPTRLGYKPRIPLISREVPKLSDIVVDEMFVGFTAATGRHGQSSAHYVMGWSFASGGEHPLAAMLDISQLPPPPPNKAKKRGYNGKVIALIVALSTVISIMLVLLFLFMMYKKRMQQEEILEDWEIDHPHRFRYRDLYKATEGFKENRVVGTGGFGIVYRGNIRSSSDQIAVKKITPNSMQGVREFVAEIESLGRLRHKNLVNLQGWCKHRNDLLLIYDYIPNGSLDSLLYSKPRRSGAVLSWNARFQIAKGIASGLLYLHEEWEQIVIHRDVKPSNVLIDSDMNPRLGDFGLARLYERGSQSCTTVVVGTIGYMAPELARNGNSSSASDVFAFGVLLLEIVSGRKPTDSGTFFIADWVMELQASGEILSAIDPRLGSGYDEGEARLALAVGLLCCHHKPESRPLMRMVLRYLNRDEDVPEIHDNWGYSDSSRTDLGSKLVGYISSDRASSSHSHTSSSLTRISSTSLISGR.

An N-terminal signal peptide occupies residues 1 to 19; the sequence is MGRAKSMVSLLLVLFLVRA. Residues 20-306 lie on the Extracellular side of the membrane; the sequence is HVATTETTTE…AKKRGYNGKV (287 aa). Residues 26–273 form a legume-lectin like region; it reads TTTEFIFHGF…AHYVMGWSFA (248 aa). The chain crosses the membrane as a helical span at residues 307–327; the sequence is IALIVALSTVISIMLVLLFLF. The Cytoplasmic segment spans residues 328 to 691; it reads MMYKKRMQQE…ISSTSLISGR (364 aa). Positions 363–641 constitute a Protein kinase domain; sequence FKENRVVGTG…LNRDEDVPEI (279 aa). ATP contacts are provided by residues 369 to 377 and Lys-392; that span reads VGTGGFGIV. The active-site Proton acceptor is the Asp-491.

The protein in the C-terminal section; belongs to the protein kinase superfamily. Ser/Thr protein kinase family. In the N-terminal section; belongs to the leguminous lectin family.

The protein localises to the cell membrane. It catalyses the reaction L-seryl-[protein] + ATP = O-phospho-L-seryl-[protein] + ADP + H(+). The enzyme catalyses L-threonyl-[protein] + ATP = O-phospho-L-threonyl-[protein] + ADP + H(+). In terms of biological role, involved in negative regulation of abscisic acid response in seed germination. This chain is Lectin-domain containing receptor kinase VI.4 (LECRK64), found in Arabidopsis thaliana (Mouse-ear cress).